Reading from the N-terminus, the 31-residue chain is Diuretic hormone class 2 (31 aa).

Pro-31 is subject to Proline amide.

Belongs to the diuretic hormone class 2 family.

It is found in the secreted. Its function is as follows. Regulation of fluid secretion. Stimulates primary urine secretion by Malpighian tubules and causes a dose-dependent stimulation of cAMP levels in the tubules. Has a nonselective effect on Na(+)/K(+) ion transport. In vitro, primarily elevates intracellular Ca(2+). The chain is Diuretic hormone class 2 from Apis mellifera (Honeybee).